The chain runs to 269 residues: Cyclic AMP-dependent transcription factor ATF-1 (269 aa).

Residues 1–90 (MEDSHKSNTT…GEGENPSISA (90 aa)) are disordered. The span at 9–18 (TTETASQPGS) shows a compositional bias: polar residues. Residues 31–90 (QVSSLSESEESQDSSDSIGSSQKAHGILARRPSYRKILKDLSSEDTRGRKGEGENPSISA) form the KID domain. Residue Ser63 is modified to Phosphoserine; by CaMK1, CDK3, RPS6KA4 and RPS6KA5. Basic and acidic residues predominate over residues 67–83 (ILKDLSSEDTRGRKGEG). Ser196 is subject to Phosphoserine; by HIPK2. Lys206 participates in a covalent cross-link: Glycyl lysine isopeptide (Lys-Gly) (interchain with G-Cter in SUMO2). The region spanning 211–269 (QLRREIRLMKNREAARECRRKKKEYVKCLENRVAVLENQNKTLIEELKTLKDLYSHKSV) is the bZIP domain. The basic motif stretch occupies residues 213 to 237 (RREIRLMKNREAARECRRKKKEYVK). Residues 239 to 260 (LENRVAVLENQNKTLIEELKTL) form a leucine-zipper region.

The protein belongs to the bZIP family. ATF subfamily. As to quaternary structure, binds DNA as a dimer. Interacts with HIPK2 and CDK3. Interacts with MOTS-c, a peptide produced by the mitochondrially encoded 12S rRNA MT-RNR1; the interaction occurs in the nucleus following metabolic stress. In terms of processing, phosphorylated at Ser-196 by HIPK2 in response to genotoxic stress. This phosphorylation promotes transcription repression of FTH1 and other antioxidant detoxification genes. The CDK3-mediated phosphorylation at Ser-63 promotes its transactivation and transcriptional activities. Phosphorylated at Ser-63 by RPS6KA4 and RPS6KA5 in response to mitogenic or stress stimuli.

It localises to the nucleus. Its function is as follows. Binds the cAMP response element (CRE) (consensus: 5'-GTGACGT[AC][AG]-3'), a sequence present in many viral and cellular promoters. Binds to the Tax-responsive element (TRE) of HTLV-I. Mediates PKA-induced stimulation of CRE-reporter genes. Represses the expression of FTH1 and other antioxidant detoxification genes. Triggers cell proliferation and transformation. The polypeptide is Cyclic AMP-dependent transcription factor ATF-1 (Atf1) (Mus musculus (Mouse)).